We begin with the raw amino-acid sequence, 538 residues long: Syncytin-2 (538 aa).

The N-terminal stretch at 1 to 15 (MGLLLLVLILTPSLA) is a signal peptide. The Extracellular portion of the chain corresponds to 16–478 (AYRHPDFPLL…GWLNWEGTWK (463 aa)). The CXXC motif lies at 43–46 (CWLC). Disulfide bonds link C43/C46, C43/C439, and C431/C438. N133, N146, N177, N220, N241, N247, N312, and N332 each carry an N-linked (GlcNAc...) asparagine glycan. Residues 354 to 374 (FIPLLAGLGILAGTGTGIAGI) are fusion peptide. Residues 414–430 (LQNRRGLDMLTAAQGGI) carry the CKS-17 motif. The CX6CC motif lies at 431-439 (CLALDEKCC). N443 is a glycosylation site (N-linked (GlcNAc...) asparagine). The helical transmembrane segment at 479-499 (WFSWVLPLTGPLVSLLLLLLF) threads the bilayer. Over 500-538 (GPCLLNLITQFVSSRLQAIKLQTNLSAGRRPRNIQESPF) the chain is Cytoplasmic.

Belongs to the gamma type-C retroviral envelope protein family. HERV class-I FRD env subfamily. As to quaternary structure, the surface and transmembrane proteins form a heterodimer. They are attached by non-covalent interactions or by a labile interchain disulfide bond. Specific enzymatic cleavages in vivo yield the mature SU and TM proteins. Post-translationally, the CXXC motif is highly conserved across a broad range of retroviral envelope proteins. It is thought to participate in the formation of a labile disulfide bond possibly with the CX6CC motif present in the transmembrane protein.

It localises to the virion. The protein localises to the cell membrane. In terms of biological role, this endogenous retroviral envelope protein has retained its original fusogenic properties and participates in trophoblast fusion and the formation of a syncytium during placenta morphogenesis. The interaction with MFSD2A is apparently important for this process. Endogenous envelope proteins may have kept, lost or modified their original function during evolution but this one can still make pseudotypes with MLV, HIV-1 or SIV-1 virions and confer infectivity. Retroviral envelope proteins mediate receptor recognition and membrane fusion during early infection. The surface protein mediates receptor recognition, while the transmembrane protein anchors the envelope heterodimer to the viral membrane through one transmembrane domain. The other hydrophobic domain, called fusion peptide, mediates fusion of the viral membrane with the target cell membrane. The sequence is that of Syncytin-2 (ERVFRD-1) from Gorilla gorilla gorilla (Western lowland gorilla).